Here is a 65-residue protein sequence, read N- to C-terminus: UPF0434 protein HS_0657 (65 aa).

The protein belongs to the UPF0434 family.

In Histophilus somni (strain 129Pt) (Haemophilus somnus), this protein is UPF0434 protein HS_0657.